Reading from the N-terminus, the 85-residue chain is Large ribosomal subunit protein bL27 (85 aa).

Positions 1-22 (MAHKKAAGSTRNGRDSESKRLG) are disordered.

The protein belongs to the bacterial ribosomal protein bL27 family.

In Pseudoalteromonas translucida (strain TAC 125), this protein is Large ribosomal subunit protein bL27.